The primary structure comprises 238 residues: Transcriptional repressor ThaA (238 aa).

The HTH luxR-type domain occupies 169-234 (IPGEIARVSL…HAAVKATLVG (66 aa)). Positions 193 to 212 (VSEISSILQMSVRNINFHIQ) form a DNA-binding region, H-T-H motif.

The protein belongs to the autoinducer-regulated transcriptional regulatory protein family.

In terms of biological role, represses thailandamide production. In Burkholderia thailandensis (strain ATCC 700388 / DSM 13276 / CCUG 48851 / CIP 106301 / E264), this protein is Transcriptional repressor ThaA.